A 322-amino-acid polypeptide reads, in one-letter code: Replication factor C small subunit (322 aa).

50-57 (GPAGTGKT) serves as a coordination point for ATP.

It belongs to the activator 1 small subunits family. RfcS subfamily. Heteromultimer composed of small subunits (RfcS) and large subunits (RfcL).

Functionally, part of the RFC clamp loader complex which loads the PCNA sliding clamp onto DNA. The chain is Replication factor C small subunit from Halobacterium salinarum (strain ATCC 700922 / JCM 11081 / NRC-1) (Halobacterium halobium).